Consider the following 141-residue polypeptide: Protein X (141 aa).

Positions 24–48 are enriched in low complexity; it reads QSSGPSFPRPAAGSAASSASSPSPS. A disordered region spans residues 24-52; that stretch reads QSSGPSFPRPAAGSAASSASSPSPSDESD. Residues 68-113 are mitochondrial targeting sequence; the sequence is PCCLVFTCAELRTMDSTVNFVSWHANRQLGMPSKDLWTPYIKDQLL.

It belongs to the orthohepadnavirus protein X family. May form homodimer. May interact with host CEBPA, CFLAR, CREB1, DDB1, E4F1, HBXIP, HSPD1/HSP60, NFKBIA, POLR2E and SMAD4. Interacts with host SMC5-SMC6 complex and induces its degradation. Interacts with host TRPC4AP; leading to prevent ubiquitination of TRPC4AP. Interacts with host PLSCR1; this interaction promotes ubiquitination and degradation of HBx and impairs HBx-mediated cell proliferation. A fraction may be phosphorylated in insect cells and HepG2 cells, a human hepatoblastoma cell line. Phosphorylated in vitro by host protein kinase C or mitogen-activated protein kinase. N-acetylated in insect cells.

Its subcellular location is the host cytoplasm. It localises to the host nucleus. The protein localises to the host mitochondrion. Its function is as follows. Multifunctional protein that plays a role in silencing host antiviral defenses and promoting viral transcription. Does not seem to be essential for HBV infection. May be directly involved in development of cirrhosis and liver cancer (hepatocellular carcinoma). Most of cytosolic activities involve modulation of cytosolic calcium. The effect on apoptosis is controversial depending on the cell types in which the studies have been conducted. May induce apoptosis by localizing in mitochondria and causing loss of mitochondrial membrane potential. May also modulate apoptosis by binding host CFLAR, a key regulator of the death-inducing signaling complex (DISC). Promotes viral transcription by using the host E3 ubiquitin ligase DDB1 to target the SMC5-SMC6 complex to proteasomal degradation. This host complex would otherwise bind to viral episomal DNA, and prevents its transcription. Moderately stimulates transcription of many different viral and cellular transcription elements. Promoters and enhancers stimulated by HBx contain DNA binding sites for NF-kappa-B, AP-1, AP-2, c-EBP, ATF/CREB, or the calcium-activated factor NF-AT. This is Protein X from Woodchuck hepatitis B virus (isolate 7) (WHV).